Reading from the N-terminus, the 349-residue chain is ATPase GET3 (349 aa).

26–33 (KGGVGKTT) contacts ATP. Asp-57 is an active-site residue. Positions 240 and 267 each coordinate ATP. Residues Cys-280 and Cys-283 each coordinate Zn(2+).

Belongs to the arsA ATPase family. In terms of assembly, homodimer. Component of the Golgi to ER traffic (GET) complex, which is composed of GET1, GET2 and GET3. Within the complex, GET1 and GET2 form a heterotetramer which is stabilized by phosphatidylinositol binding and which binds to the GET3 homodimer. Interacts with the chloride channel protein GEF1.

It localises to the cytoplasm. The protein localises to the endoplasmic reticulum. Its subcellular location is the golgi apparatus. In terms of biological role, ATPase required for the post-translational delivery of tail-anchored (TA) proteins to the endoplasmic reticulum. Recognizes and selectively binds the transmembrane domain of TA proteins in the cytosol. This complex then targets to the endoplasmic reticulum by membrane-bound receptors GET1 and GET2, where the tail-anchored protein is released for insertion. This process is regulated by ATP binding and hydrolysis. ATP binding drives the homodimer towards the closed dimer state, facilitating recognition of newly synthesized TA membrane proteins. ATP hydrolysis is required for insertion. Subsequently, the homodimer reverts towards the open dimer state, lowering its affinity for the GET1-GET2 receptor, and returning it to the cytosol to initiate a new round of targeting. Cooperates with the HDEL receptor ERD2 to mediate the ATP-dependent retrieval of resident ER proteins that contain a C-terminal H-D-E-L retention signal from the Golgi to the ER. Involved in low-level resistance to the oxyanions arsenite and arsenate, and in heat tolerance. In Kluyveromyces lactis (strain ATCC 8585 / CBS 2359 / DSM 70799 / NBRC 1267 / NRRL Y-1140 / WM37) (Yeast), this protein is ATPase GET3.